Here is a 506-residue protein sequence, read N- to C-terminus: 5-OH-xanthotoxin synthase (506 aa).

The helical transmembrane segment at Pro-3–His-23 threads the bilayer. The tract at residues Thr-365–Ile-370 is substrate specificity. Cys-446 contacts heme.

The protein belongs to the cytochrome P450 family. It depends on heme as a cofactor.

The protein resides in the microsome membrane. It carries out the reaction xanthotoxin + reduced [NADPH--hemoprotein reductase] + O2 = 5-hydroxyxanthotoxin + oxidized [NADPH--hemoprotein reductase] + H2O + 2 H(+). It functions in the pathway secondary metabolite biosynthesis. Its function is as follows. Involved in the biosynthesis of coumarins and furanocoumarins (FCs), natural products required for defense responses against attacks by predators with potential medical and agroindustrial usages such as anticoagulant, rodenticide and artificial vanilla substitutes. Catalyzes the conversion of xanthotoxin into 5-hydroxyxanthotoxin. This is 5-OH-xanthotoxin synthase from Pastinaca sativa (Wild parsnip).